The primary structure comprises 335 residues: Beta-hexosaminidase (335 aa).

Residues aspartate 60, arginine 68, arginine 133, and 163 to 164 contribute to the substrate site; that span reads KH. Histidine 176 acts as the Proton donor/acceptor in catalysis. The active-site Nucleophile is aspartate 247.

The protein belongs to the glycosyl hydrolase 3 family. NagZ subfamily.

Its subcellular location is the cytoplasm. The enzyme catalyses Hydrolysis of terminal non-reducing N-acetyl-D-hexosamine residues in N-acetyl-beta-D-hexosaminides.. It functions in the pathway cell wall biogenesis; peptidoglycan recycling. Its function is as follows. Plays a role in peptidoglycan recycling by cleaving the terminal beta-1,4-linked N-acetylglucosamine (GlcNAc) from peptide-linked peptidoglycan fragments, giving rise to free GlcNAc, anhydro-N-acetylmuramic acid and anhydro-N-acetylmuramic acid-linked peptides. This chain is Beta-hexosaminidase, found in Stenotrophomonas maltophilia (strain R551-3).